We begin with the raw amino-acid sequence, 754 residues long: Probable galactinol--sucrose galactosyltransferase 1 (754 aa).

It belongs to the glycosyl hydrolases 36 family.

The catalysed reaction is alpha-D-galactosyl-(1-&gt;3)-1D-myo-inositol + sucrose = raffinose + myo-inositol. In terms of biological role, transglycosidase operating by a ping-pong reaction mechanism. Involved in the synthesis of raffinose, a major soluble carbohydrate in seeds, roots and tubers. The chain is Probable galactinol--sucrose galactosyltransferase 1 (RFS1) from Arabidopsis thaliana (Mouse-ear cress).